The primary structure comprises 62 residues: Bacteriocin pediocin PA-1 (62 aa).

Residues 1 to 18 (MKKIEKLTEKEMANIIGG) constitute a propeptide that is removed on maturation. 2 disulfides stabilise this stretch: cysteine 27–cysteine 32 and cysteine 42–cysteine 62. Residues 40 to 52 (TTCIINNGAMAWA) form a hydrophobic region.

It belongs to the bacteriocin class IIA/YGNGV family.

The protein resides in the secreted. Bactericidal activity (effective inhibitor of L.monocytogenes). The chain is Bacteriocin pediocin PA-1 (pedA) from Pediococcus acidilactici.